The chain runs to 955 residues: 2-oxoglutarate dehydrogenase E1 component (955 aa).

The protein belongs to the alpha-ketoglutarate dehydrogenase family. Homodimer. Part of the 2-oxoglutarate dehydrogenase (OGDH) complex composed of E1 (2-oxoglutarate dehydrogenase), E2 (dihydrolipoamide succinyltransferase) and E3 (dihydrolipoamide dehydrogenase); the complex contains multiple copies of the three enzymatic components (E1, E2 and E3). The cofactor is thiamine diphosphate.

The catalysed reaction is N(6)-[(R)-lipoyl]-L-lysyl-[protein] + 2-oxoglutarate + H(+) = N(6)-[(R)-S(8)-succinyldihydrolipoyl]-L-lysyl-[protein] + CO2. E1 component of the 2-oxoglutarate dehydrogenase (OGDH) complex which catalyzes the decarboxylation of 2-oxoglutarate, the first step in the conversion of 2-oxoglutarate to succinyl-CoA and CO(2). This Bacillus anthracis (strain A0248) protein is 2-oxoglutarate dehydrogenase E1 component.